The sequence spans 88 residues: HssA/B-like protein 11 (88 aa).

Belongs to the hssA/B family.

In Dictyostelium discoideum (Social amoeba), this protein is HssA/B-like protein 11 (hssl11).